The primary structure comprises 339 residues: Glycerol-3-phosphate dehydrogenase [NAD(P)+] (339 aa).

Residues serine 15, tyrosine 16, histidine 36, and lysine 110 each contribute to the NADPH site. Positions 110, 139, and 141 each coordinate sn-glycerol 3-phosphate. Alanine 143 contributes to the NADPH binding site. Positions 195, 248, 258, 259, and 260 each coordinate sn-glycerol 3-phosphate. Lysine 195 (proton acceptor) is an active-site residue. Arginine 259 contributes to the NADPH binding site. NADPH-binding residues include valine 283 and glutamate 285.

The protein belongs to the NAD-dependent glycerol-3-phosphate dehydrogenase family.

It localises to the cytoplasm. The enzyme catalyses sn-glycerol 3-phosphate + NAD(+) = dihydroxyacetone phosphate + NADH + H(+). The catalysed reaction is sn-glycerol 3-phosphate + NADP(+) = dihydroxyacetone phosphate + NADPH + H(+). The protein operates within membrane lipid metabolism; glycerophospholipid metabolism. Functionally, catalyzes the reduction of the glycolytic intermediate dihydroxyacetone phosphate (DHAP) to sn-glycerol 3-phosphate (G3P), the key precursor for phospholipid synthesis. This chain is Glycerol-3-phosphate dehydrogenase [NAD(P)+], found in Pectobacterium atrosepticum (strain SCRI 1043 / ATCC BAA-672) (Erwinia carotovora subsp. atroseptica).